Reading from the N-terminus, the 159-residue chain is MRIGHGFDVHKFGGEGPVIIGGVSVPYEQGLIAHSDGDVALHALCDALLGAIAEGDIGRHFPDTDDKWKGADSRALLRDVYRRVKEKGLELGNADVTIIAQAPKMAPHIKHMCAAIAEDLETSLDNVNVKATTSEGLGFTGRKEGIACEAVVLLVKKSY.

2 residues coordinate a divalent metal cation: aspartate 8 and histidine 10. 4-CDP-2-C-methyl-D-erythritol 2-phosphate contacts are provided by residues 8–10 (DVH) and 34–35 (HS). Residue histidine 42 participates in a divalent metal cation binding. Residues 56 to 58 (DIG), 61 to 65 (FPDTD), 100 to 106 (AQAPKMA), 132 to 135 (TTSE), phenylalanine 139, and arginine 142 contribute to the 4-CDP-2-C-methyl-D-erythritol 2-phosphate site.

It belongs to the IspF family. Homotrimer. A divalent metal cation serves as cofactor.

The catalysed reaction is 4-CDP-2-C-methyl-D-erythritol 2-phosphate = 2-C-methyl-D-erythritol 2,4-cyclic diphosphate + CMP. Its pathway is isoprenoid biosynthesis; isopentenyl diphosphate biosynthesis via DXP pathway; isopentenyl diphosphate from 1-deoxy-D-xylulose 5-phosphate: step 4/6. In terms of biological role, involved in the biosynthesis of isopentenyl diphosphate (IPP) and dimethylallyl diphosphate (DMAPP), two major building blocks of isoprenoid compounds. Catalyzes the conversion of 4-diphosphocytidyl-2-C-methyl-D-erythritol 2-phosphate (CDP-ME2P) to 2-C-methyl-D-erythritol 2,4-cyclodiphosphate (ME-CPP) with a corresponding release of cytidine 5-monophosphate (CMP). In Aliivibrio salmonicida (strain LFI1238) (Vibrio salmonicida (strain LFI1238)), this protein is 2-C-methyl-D-erythritol 2,4-cyclodiphosphate synthase.